Reading from the N-terminus, the 956-residue chain is Glutamate receptor ionotropic, kainate 4 (956 aa).

The signal sequence occupies residues Met1 to Cys20. Topologically, residues Ser21–Pro545 are extracellular. N-linked (GlcNAc...) asparagine glycans are attached at residues Asn158, Asn220, Asn272, Asn286, Asn323, Asn408, Asn415, and Asn479. Residues Gly500, Thr502, and Arg507 each contribute to the L-glutamate site. A helical membrane pass occupies residues Gly546 to Ala566. Topologically, residues Arg567–Gly623 are cytoplasmic. Residues Val624 to Leu644 form a helical membrane-spanning segment. The Extracellular portion of the chain corresponds to Thr645–Asn804. Residues Ser674, Ser675, and Glu723 each contribute to the L-glutamate site. A glycan (N-linked (GlcNAc...) asparagine) is linked at Asn736. A helical transmembrane segment spans residues Ile805–Leu825. Residues Glu826 to Glu956 are Cytoplasmic-facing. Disordered regions lie at residues Arg863 to Asn889 and Leu931 to Glu956. Basic and acidic residues predominate over residues Arg939 to Lys948.

This sequence belongs to the glutamate-gated ion channel (TC 1.A.10.1) family. GRIK4 subfamily. Homodimer. Can form functional heteromeric receptors with GRIK1, GRIK2 and GRIK3.

The protein resides in the cell membrane. It localises to the postsynaptic cell membrane. Its subcellular location is the presynaptic cell membrane. In terms of biological role, ionotropic glutamate receptor that functions as a cation-permeable ligand-gated ion channel. Cannot form functional channels on its own. Shows channel activity only in heteromeric assembly with GRIK1, GRIK2 and GRIK3 subunits. In Homo sapiens (Human), this protein is Glutamate receptor ionotropic, kainate 4 (GRIK4).